A 229-amino-acid polypeptide reads, in one-letter code: NAD(P)H-hydrate epimerase (229 aa).

The 212-residue stretch at 11–222 folds into the YjeF N-terminal domain; that stretch reads YAAADIRAAE…DVGLDLSGAT (212 aa). 59 to 63 provides a ligand contact to (6S)-NADPHX; it reads NNGGD. Residues Asn-60 and Asp-124 each coordinate K(+). Residues 128 to 136 and Asp-164 each bind (6S)-NADPHX; that span reads GIGTTASPA. Ser-167 serves as a coordination point for K(+).

Belongs to the NnrE/AIBP family. K(+) is required as a cofactor.

It carries out the reaction (6R)-NADHX = (6S)-NADHX. The enzyme catalyses (6R)-NADPHX = (6S)-NADPHX. Catalyzes the epimerization of the S- and R-forms of NAD(P)HX, a damaged form of NAD(P)H that is a result of enzymatic or heat-dependent hydration. This is a prerequisite for the S-specific NAD(P)H-hydrate dehydratase to allow the repair of both epimers of NAD(P)HX. In Clavibacter sepedonicus (Clavibacter michiganensis subsp. sepedonicus), this protein is NAD(P)H-hydrate epimerase.